A 218-amino-acid chain; its full sequence is MRFDFHTHTVFSDGELIPAELVRRARVLKHRAIAITDHADFSNYKELIEKTTIAKEELKKYWDDIIVIVGVELTHIPPKSIPKMAKKAKDLGAEIVVVHGETVVEPVEEKTNYYASISEDVDILAHPGFIDKETAENLKENDIFVEITSRRGHNITNGYVANIAREFGLKTLINTDTHAPEDLIDDEFAKKVGLGAGLTNKELENTLLHYPKELLKRI.

This is an uncharacterized protein from Methanocaldococcus jannaschii (strain ATCC 43067 / DSM 2661 / JAL-1 / JCM 10045 / NBRC 100440) (Methanococcus jannaschii).